We begin with the raw amino-acid sequence, 146 residues long: Small ribosomal subunit protein bS6 (146 aa).

The tract at residues 100 to 146 (QSAMMRKRDDDDRGDRPDRGDRGRGPRPDRPPRRPRDDAAASDEGGF) is disordered. The span at 105 to 138 (RKRDDDDRGDRPDRGDRGRGPRPDRPPRRPRDDA) shows a compositional bias: basic and acidic residues.

The protein belongs to the bacterial ribosomal protein bS6 family.

In terms of biological role, binds together with bS18 to 16S ribosomal RNA. In Methylocella silvestris (strain DSM 15510 / CIP 108128 / LMG 27833 / NCIMB 13906 / BL2), this protein is Small ribosomal subunit protein bS6.